A 111-amino-acid polypeptide reads, in one-letter code: Phosphoribosyl-ATP pyrophosphatase (111 aa).

Belongs to the PRA-PH family.

Its subcellular location is the cytoplasm. The catalysed reaction is 1-(5-phospho-beta-D-ribosyl)-ATP + H2O = 1-(5-phospho-beta-D-ribosyl)-5'-AMP + diphosphate + H(+). The protein operates within amino-acid biosynthesis; L-histidine biosynthesis; L-histidine from 5-phospho-alpha-D-ribose 1-diphosphate: step 2/9. The protein is Phosphoribosyl-ATP pyrophosphatase of Pseudomonas entomophila (strain L48).